Here is a 675-residue protein sequence, read N- to C-terminus: Acyl-coenzyme A oxidase 3, peroxisomal (675 aa).

The N-terminal 34 residues, 1 to 34, are a transit peptide targeting the peroxisome; it reads MSDNRALRRAHVLANHILQSNPPSSNPSLSRELC. 442–457 contacts FAD; that stretch reads AVGGQGVKTENLVGQL.

It belongs to the acyl-CoA oxidase family. FAD serves as cofactor. Most abundant in flowers and senescing rosette leaves. Lower expression in hypocotyls, stems, young rosette leaves, cotyledons, cauline leaves and root tip of young seedlings.

It is found in the peroxisome. It catalyses the reaction a 2,3-saturated acyl-CoA + O2 = a (2E)-enoyl-CoA + H2O2. Its pathway is lipid metabolism; peroxisomal fatty acid beta-oxidation. Catalyzes the desaturation of medium-chain acyl-CoAs to 2-trans-enoyl-CoAs. Active on C8:0- to C14:0-CoA with a maximal activity on C12:0-CoA. The chain is Acyl-coenzyme A oxidase 3, peroxisomal (ACX3) from Arabidopsis thaliana (Mouse-ear cress).